A 456-amino-acid chain; its full sequence is Bifunctional protein GlmU (456 aa).

The pyrophosphorylase stretch occupies residues 1–229; the sequence is MLNNAMSVVI…LSEVEGVNNR (229 aa). UDP-N-acetyl-alpha-D-glucosamine is bound by residues 11-14, Lys25, Gln76, 81-82, 103-105, Gly140, Glu154, Asn169, and Asn227; these read LAAG, GT, and YGD. Residue Asp105 participates in Mg(2+) binding. Position 227 (Asn227) interacts with Mg(2+). The segment at 230-250 is linker; the sequence is LQLSRLERVYQSEQAEKLLLA. The interval 251–456 is N-acetyltransferase; sequence GVMLRDPARF…EGWRRPVKKK (206 aa). UDP-N-acetyl-alpha-D-glucosamine is bound by residues Arg333 and Lys351. His363 serves as the catalytic Proton acceptor. 2 residues coordinate UDP-N-acetyl-alpha-D-glucosamine: Tyr366 and Asn377. Acetyl-CoA is bound by residues Ala380, 386 to 387, Ser405, Ala423, and Arg440; that span reads NY.

The protein in the N-terminal section; belongs to the N-acetylglucosamine-1-phosphate uridyltransferase family. In the C-terminal section; belongs to the transferase hexapeptide repeat family. As to quaternary structure, homotrimer. Mg(2+) is required as a cofactor.

The protein localises to the cytoplasm. The enzyme catalyses alpha-D-glucosamine 1-phosphate + acetyl-CoA = N-acetyl-alpha-D-glucosamine 1-phosphate + CoA + H(+). It catalyses the reaction N-acetyl-alpha-D-glucosamine 1-phosphate + UTP + H(+) = UDP-N-acetyl-alpha-D-glucosamine + diphosphate. It participates in nucleotide-sugar biosynthesis; UDP-N-acetyl-alpha-D-glucosamine biosynthesis; N-acetyl-alpha-D-glucosamine 1-phosphate from alpha-D-glucosamine 6-phosphate (route II): step 2/2. It functions in the pathway nucleotide-sugar biosynthesis; UDP-N-acetyl-alpha-D-glucosamine biosynthesis; UDP-N-acetyl-alpha-D-glucosamine from N-acetyl-alpha-D-glucosamine 1-phosphate: step 1/1. The protein operates within bacterial outer membrane biogenesis; LPS lipid A biosynthesis. In terms of biological role, catalyzes the last two sequential reactions in the de novo biosynthetic pathway for UDP-N-acetylglucosamine (UDP-GlcNAc). The C-terminal domain catalyzes the transfer of acetyl group from acetyl coenzyme A to glucosamine-1-phosphate (GlcN-1-P) to produce N-acetylglucosamine-1-phosphate (GlcNAc-1-P), which is converted into UDP-GlcNAc by the transfer of uridine 5-monophosphate (from uridine 5-triphosphate), a reaction catalyzed by the N-terminal domain. The sequence is that of Bifunctional protein GlmU from Escherichia fergusonii (strain ATCC 35469 / DSM 13698 / CCUG 18766 / IAM 14443 / JCM 21226 / LMG 7866 / NBRC 102419 / NCTC 12128 / CDC 0568-73).